The primary structure comprises 273 residues: Ribosomal RNA small subunit methyltransferase A (273 aa).

S-adenosyl-L-methionine-binding residues include Asn-18, Leu-20, Gly-45, Glu-66, Asp-91, and Asn-113.

It belongs to the class I-like SAM-binding methyltransferase superfamily. rRNA adenine N(6)-methyltransferase family. RsmA subfamily.

It is found in the cytoplasm. It catalyses the reaction adenosine(1518)/adenosine(1519) in 16S rRNA + 4 S-adenosyl-L-methionine = N(6)-dimethyladenosine(1518)/N(6)-dimethyladenosine(1519) in 16S rRNA + 4 S-adenosyl-L-homocysteine + 4 H(+). Specifically dimethylates two adjacent adenosines (A1518 and A1519) in the loop of a conserved hairpin near the 3'-end of 16S rRNA in the 30S particle. May play a critical role in biogenesis of 30S subunits. This Escherichia coli O17:K52:H18 (strain UMN026 / ExPEC) protein is Ribosomal RNA small subunit methyltransferase A.